Reading from the N-terminus, the 598-residue chain is F-box/WD repeat-containing protein 8 (598 aa).

At Met1 the chain carries N-acetylmethionine. The disordered stretch occupies residues 20–97 (SQALRRRRRL…PDRDATEPEP (78 aa)). A compositionally biased stretch (basic and acidic residues) spans 29 to 44 (LEAGERRSPRRPEAGA). Residues 51-65 (GYLGLAQGLLEGAGR) show a composition bias toward low complexity. Positions 73–93 (RGGDRKDTSSRSRSPPDRDAT) are enriched in basic and acidic residues. Ser84 bears the Phosphoserine mark. Ser86 carries the phosphoserine; by MTOR modification. An F-box domain is found at 113 to 159 (PFFDVRLPYELAINIFQYLNRRELGLCAQVSKTWKVIAEDEVLWYRL). 8 WD repeats span residues 201–250 (AVSE…LESE), 259–299 (QPYV…FEHD), 300–340 (ARIQ…SEFE), 341–383 (VQKL…LHYV), 384–429 (YGQP…SKLG), 430–475 (NALG…SAHQ), 476–513 (LGVS…EVHS), and 514–561 (RHPV…AYEF).

In terms of assembly, component of the Cul7-RING(FBXW8) complex consisting of CUL7, RBX1, SKP1 and FBXW8; within the complex interacts with CUL7 and SKP1. Interacts with GLMN isoform 1. Interacts with OBSL1, CUL1, CUL2, CCT6B, PFDN5, CCT2, CCT3, CCT6A, CCT7, VBP1, CCDC8, ARF1, TRIP13, PDCD5 and GORASP1. Interacts with MAP4K1/HPK1 (when autophosphorylated). Associated component of the 3M complex. Interacts with POUF51 (when phosphorylated on 'Ser-347'). In terms of processing, phosphorylation at Ser-86 by mTORC2 promotes FBXW8 stabilization, allowing its translocation to the cytosol in response to insulin. Widely expressed. Expressed at higher level in skeletal muscle, cartilage and lung.

It localises to the cytoplasm. Its subcellular location is the perinuclear region. The protein localises to the golgi apparatus. The protein resides in the cytosol. The protein operates within protein modification; protein ubiquitination. In terms of biological role, substrate-recognition component of the Cul7-RING(FBXW8) ubiquitin ligase complex, which mediates the ubiquitination and subsequent proteasomal degradation of target proteins. The Cul7-RING(FBXW8) complex mediates ubiquitination and consequent degradation of GORASP1, acting as a component of the ubiquitin ligase pathway that regulates Golgi morphogenesis and dendrite patterning in brain. Mediates ubiquitination and degradation of IRS1 in a mTOR-dependent manner: the Cul7-RING(FBXW8) complex recognizes and binds IRS1 previously phosphorylated by S6 kinase (RPS6KB1 or RPS6KB2). The Cul7-RING(FBXW8) complex also mediates ubiquitination of MAP4K1/HPK1: recognizes and binds autophosphorylated MAP4K1/HPK1, leading to its degradation, thereby affecting cell proliferation and differentiation. The Cul7-RING(FBXW8) complex also mediates ubiquitination of phosphorylated cyclin-D1 (CCND1). The Cul7-RING(FBXW8) complex is however not a major regulator of CCND1 stability during the G1/S transition. Associated component of the 3M complex, suggesting that it mediates some of 3M complex functions. The sequence is that of F-box/WD repeat-containing protein 8 (Fbxw8) from Mus musculus (Mouse).